Here is a 513-residue protein sequence, read N- to C-terminus: Sterol 14-alpha demethylase (513 aa).

A helical membrane pass occupies residues 8–28 (AYALLAFVAIMALNVTYQFLF). N-linked (GlcNAc...) asparagine glycosylation is found at Asn-32 and Asn-332. Cys-453 contacts heme.

This sequence belongs to the cytochrome P450 family. Heme is required as a cofactor.

The protein resides in the endoplasmic reticulum membrane. It carries out the reaction a 14alpha-methyl steroid + 3 reduced [NADPH--hemoprotein reductase] + 3 O2 = a Delta(14) steroid + formate + 3 oxidized [NADPH--hemoprotein reductase] + 4 H2O + 4 H(+). It catalyses the reaction a 14alpha-methyl steroid + reduced [NADPH--hemoprotein reductase] + O2 = a 14alpha-hydroxymethyl steroid + oxidized [NADPH--hemoprotein reductase] + H2O + H(+). The enzyme catalyses a 14alpha-hydroxymethyl steroid + reduced [NADPH--hemoprotein reductase] + O2 = a 14alpha-formyl steroid + oxidized [NADPH--hemoprotein reductase] + 2 H2O + H(+). The catalysed reaction is a 14alpha-formyl steroid + reduced [NADPH--hemoprotein reductase] + O2 = a Delta(14) steroid + formate + oxidized [NADPH--hemoprotein reductase] + H2O + 2 H(+). It carries out the reaction lanosterol + 3 reduced [NADPH--hemoprotein reductase] + 3 O2 = 4,4-dimethyl-5alpha-cholesta-8,14,24-trien-3beta-ol + formate + 3 oxidized [NADPH--hemoprotein reductase] + 4 H2O + 4 H(+). It catalyses the reaction lanosterol + reduced [NADPH--hemoprotein reductase] + O2 = 32-hydroxylanosterol + oxidized [NADPH--hemoprotein reductase] + H2O + H(+). The enzyme catalyses 32-hydroxylanosterol + reduced [NADPH--hemoprotein reductase] + O2 = 32-oxolanosterol + oxidized [NADPH--hemoprotein reductase] + 2 H2O + H(+). The catalysed reaction is 32-oxolanosterol + reduced [NADPH--hemoprotein reductase] + O2 = 4,4-dimethyl-5alpha-cholesta-8,14,24-trien-3beta-ol + formate + oxidized [NADPH--hemoprotein reductase] + H2O + 2 H(+). It carries out the reaction eburicol + 3 reduced [NADPH--hemoprotein reductase] + 3 O2 = 14-demethyleburicol + formate + 3 oxidized [NADPH--hemoprotein reductase] + 4 H2O + 4 H(+). It catalyses the reaction eburicol + reduced [NADPH--hemoprotein reductase] + O2 = 32-hydroxyeburicol + oxidized [NADPH--hemoprotein reductase] + H2O + H(+). The enzyme catalyses 32-hydroxyeburicol + reduced [NADPH--hemoprotein reductase] + O2 = 32-oxoeburicol + oxidized [NADPH--hemoprotein reductase] + 2 H2O + H(+). The catalysed reaction is 32-oxoeburicol + reduced [NADPH--hemoprotein reductase] + O2 = 14-demethyleburicol + formate + oxidized [NADPH--hemoprotein reductase] + H2O + 2 H(+). It participates in steroid biosynthesis; sterol biosynthesis. Sterol 14alpha-demethylase, encoded by cyp51A, cyp51B and cyp51C, that plays a critical role in the third module of ergosterol biosynthesis pathway, being ergosterol the major sterol component in fungal membranes that participates in a variety of functions. The third module or late pathway involves the ergosterol synthesis itself through consecutive reactions that mainly occur in the endoplasmic reticulum (ER) membrane. In filamentous fungi, during the initial step of this module, lanosterol (lanosta-8,24-dien-3beta-ol) can be metabolized to eburicol. Sterol 14alpha-demethylase catalyzes the three-step oxidative removal of the 14alpha-methyl group (C-32) of both these sterols in the form of formate, and converts eburicol and lanosterol to 14-demethyleburicol (4,4,24-trimethylergosta-8,14,24(28)-trienol) and 4,4-dimethyl-5alpha-cholesta-8,14,24-trien-3beta-ol, respectively, which are further metabolized by other enzymes in the pathway to ergosterol. Can also use substrates not intrinsic to fungi, such as 24,25-dihydrolanosterol (DHL), producing 4,4'-dimethyl-8,14-cholestadien-3-beta-ol, but at lower rates than the endogenous substrates. In terms of biological role, as a target of azole drugs, plays a crucial role in azole drug susceptibility. The protein is Sterol 14-alpha demethylase of Aspergillus flavus (strain ATCC 200026 / FGSC A1120 / IAM 13836 / NRRL 3357 / JCM 12722 / SRRC 167).